Reading from the N-terminus, the 252-residue chain is MRFGVITLFPGMFDALWDSGVVGRALKQGKISLNFWNPRDFAHDRHRTVDARPYGGGPGMVMGIQPLRDAIHVGRAELGKGCRVLYLSPQGRRLDQAGLEALASNESLLFVAGRYEGVDERLIEMEVDEEWSIGDYVLSGGELAAMVIIDGLARLLPGVLGAAESAQQDSFVNGLLDCPHYTRPEVIEGYRVPPVLLSGDHKAIRRWRLKQALGRTWLKRPDLLSRRILDLEQQHLLAEFIREYQAEHREPR.

S-adenosyl-L-methionine contacts are provided by residues Gly-113 and 133-138 (IGDYVL).

This sequence belongs to the RNA methyltransferase TrmD family. Homodimer.

It localises to the cytoplasm. It carries out the reaction guanosine(37) in tRNA + S-adenosyl-L-methionine = N(1)-methylguanosine(37) in tRNA + S-adenosyl-L-homocysteine + H(+). Specifically methylates guanosine-37 in various tRNAs. The protein is tRNA (guanine-N(1)-)-methyltransferase of Nitrosococcus oceani (strain ATCC 19707 / BCRC 17464 / JCM 30415 / NCIMB 11848 / C-107).